The chain runs to 421 residues: ATP-dependent RNA helicase RhlB (421 aa).

The Q motif signature appears at 9-37; that stretch reads QKFSDFALHPQVVEALEKKGFYNCTPIQA. Positions 40 to 219 constitute a Helicase ATP-binding domain; the sequence is LPLTLAGRDV…FEQMNNAEYV (180 aa). Residue 53 to 60 coordinates ATP; the sequence is AQTGTGKT. The DEAD box signature appears at 165–168; the sequence is DEAD. Positions 245–390 constitute a Helicase C-terminal domain; the sequence is RLLQTLIEEE…VSKYNPEALM (146 aa). The segment at 396 to 421 is disordered; that stretch reads PLRLTRSRPGNGPRRAGAPRNRRRSG. Low complexity predominate over residues 402–414; sequence SRPGNGPRRAGAP.

The protein belongs to the DEAD box helicase family. RhlB subfamily. In terms of assembly, component of the RNA degradosome, which is a multiprotein complex involved in RNA processing and mRNA degradation.

It is found in the cytoplasm. The catalysed reaction is ATP + H2O = ADP + phosphate + H(+). DEAD-box RNA helicase involved in RNA degradation. Has RNA-dependent ATPase activity and unwinds double-stranded RNA. This is ATP-dependent RNA helicase RhlB from Salmonella agona (strain SL483).